A 109-amino-acid chain; its full sequence is Large ribosomal subunit protein uL22 (109 aa).

Belongs to the universal ribosomal protein uL22 family. As to quaternary structure, part of the 50S ribosomal subunit.

Its function is as follows. This protein binds specifically to 23S rRNA; its binding is stimulated by other ribosomal proteins, e.g. L4, L17, and L20. It is important during the early stages of 50S assembly. It makes multiple contacts with different domains of the 23S rRNA in the assembled 50S subunit and ribosome. In terms of biological role, the globular domain of the protein is located near the polypeptide exit tunnel on the outside of the subunit, while an extended beta-hairpin is found that lines the wall of the exit tunnel in the center of the 70S ribosome. This chain is Large ribosomal subunit protein uL22, found in Ralstonia pickettii (strain 12J).